A 409-amino-acid polypeptide reads, in one-letter code: Peptidase T (409 aa).

His-78 is a binding site for Zn(2+). Asp-80 is a catalytic residue. Asp-140 contributes to the Zn(2+) binding site. Glu-173 acts as the Proton acceptor in catalysis. Positions 174, 196, and 379 each coordinate Zn(2+).

This sequence belongs to the peptidase M20B family. The cofactor is Zn(2+).

It localises to the cytoplasm. It carries out the reaction Release of the N-terminal residue from a tripeptide.. In terms of biological role, cleaves the N-terminal amino acid of tripeptides. The chain is Peptidase T from Escherichia coli O139:H28 (strain E24377A / ETEC).